A 293-amino-acid polypeptide reads, in one-letter code: N-acetylneuraminate lyase (293 aa).

Aceneuramate contacts are provided by S47 and T48. Residue Y136 is the Proton donor of the active site. Residue K164 is the Schiff-base intermediate with substrate of the active site. The aceneuramate site is built by T166, G188, D190, E191, and S207.

The protein belongs to the DapA family. NanA subfamily. In terms of assembly, homotetramer.

The protein localises to the cytoplasm. The enzyme catalyses aceneuramate = aldehydo-N-acetyl-D-mannosamine + pyruvate. The protein operates within amino-sugar metabolism; N-acetylneuraminate degradation; D-fructose 6-phosphate from N-acetylneuraminate: step 1/5. Catalyzes the reversible aldol cleavage of N-acetylneuraminic acid (sialic acid; Neu5Ac) to form pyruvate and N-acetylmannosamine (ManNAc) via a Schiff base intermediate. This is N-acetylneuraminate lyase from Haemophilus influenzae (strain ATCC 51907 / DSM 11121 / KW20 / Rd).